A 316-amino-acid chain; its full sequence is Methionyl-tRNA formyltransferase (316 aa).

Position 111–114 (G111–P114) interacts with (6S)-5,6,7,8-tetrahydrofolate.

Belongs to the Fmt family.

It catalyses the reaction L-methionyl-tRNA(fMet) + (6R)-10-formyltetrahydrofolate = N-formyl-L-methionyl-tRNA(fMet) + (6S)-5,6,7,8-tetrahydrofolate + H(+). Its function is as follows. Attaches a formyl group to the free amino group of methionyl-tRNA(fMet). The formyl group appears to play a dual role in the initiator identity of N-formylmethionyl-tRNA by promoting its recognition by IF2 and preventing the misappropriation of this tRNA by the elongation apparatus. The sequence is that of Methionyl-tRNA formyltransferase from Chlamydia trachomatis serovar L2b (strain UCH-1/proctitis).